The following is a 207-amino-acid chain: Small ribosomal subunit protein uS2 (207 aa).

Belongs to the universal ribosomal protein uS2 family.

The chain is Small ribosomal subunit protein uS2 from Nitrosopumilus maritimus (strain SCM1).